A 570-amino-acid polypeptide reads, in one-letter code: Vacuolar protein sorting-associated protein 45 (570 aa).

Phosphoserine occurs at positions 307 and 441.

It belongs to the STXBP/unc-18/SEC1 family. Interacts with ZFYVE20. Interacts with STX6.

Its subcellular location is the golgi apparatus membrane. It is found in the endosome membrane. Its function is as follows. May play a role in vesicle-mediated protein trafficking from the Golgi stack through the trans-Golgi network. The protein is Vacuolar protein sorting-associated protein 45 (Vps45) of Mus musculus (Mouse).